The primary structure comprises 388 residues: Galactokinase (388 aa).

33 to 36 (EHTD) is a binding site for substrate. ATP-binding positions include S67 and 125-131 (GSGLSSS). S131 and E163 together coordinate Mg(2+). D175 acts as the Proton acceptor in catalysis. Position 225 (Y225) interacts with substrate.

This sequence belongs to the GHMP kinase family. GalK subfamily.

It localises to the cytoplasm. It carries out the reaction alpha-D-galactose + ATP = alpha-D-galactose 1-phosphate + ADP + H(+). The protein operates within carbohydrate metabolism; galactose metabolism. In terms of biological role, catalyzes the transfer of the gamma-phosphate of ATP to D-galactose to form alpha-D-galactose-1-phosphate (Gal-1-P). In Lactobacillus helveticus (Lactobacillus suntoryeus), this protein is Galactokinase.